Here is a 310-residue protein sequence, read N- to C-terminus: Melanocyte-stimulating hormone receptor (310 aa).

At 1-37 (MPMQGAQRKLLGSLNSTPTATSNLGLAANRTGAPCLE) the chain is on the extracellular side. Residue Asn29 is glycosylated (N-linked (GlcNAc...) asparagine). Residues 38 to 63 (LPIPDGLFLSLGLVSLVENVLVVAAI) traverse the membrane as a helical segment. Topologically, residues 64 to 72 (AKNRNLHSS) are cytoplasmic. The helical transmembrane segment at 73–93 (MYCFICCLALSDLLVSGSNML) threads the bilayer. At 94–110 (EAGVLATRASVVQQLHN) the chain is on the extracellular side. Residues 111 to 132 (TIDVLTCSSMLCSLCFLGAIAV) traverse the membrane as a helical segment. Residues 133-155 (DRYISIFYALRYHSIMTLPRAQR) lie on the Cytoplasmic side of the membrane. Residues 156-175 (AVAAIWVASVLSSTLFITYY) form a helical membrane-spanning segment. Residues 176–183 (DHAAVLLC) are Extracellular-facing. The helical transmembrane segment at 184-203 (LVVFFLAMLVLMAVLYVHML) threads the bilayer. Topologically, residues 204–232 (AWACQHAQGIIRLHKRQPPAHKGFGLRGA) are cytoplasmic. A helical transmembrane segment spans residues 233–258 (ATLTILLGIFFLCWGPFFLRLTLVVF). At 259-271 (CPQHLTCNCIFKN) the chain is on the extracellular side. Residues 272–292 (FKVFLTLIICNTIIDPLIYAF) traverse the membrane as a helical segment. The Cytoplasmic portion of the chain corresponds to 293-310 (RSQELRRTLKEVLGRGRW).

The protein belongs to the G-protein coupled receptor 1 family. Interacts with MGRN1, but does not undergo MGRN1-mediated ubiquitination; this interaction competes with GNAS-binding and thus inhibits agonist-induced cAMP production. Interacts with OPN3; the interaction results in a decrease in MC1R-mediated cAMP signaling and ultimately a decrease in melanin production in melanocytes.

Its subcellular location is the cell membrane. Its function is as follows. Receptor for MSH (alpha, beta and gamma) and ACTH. The activity of this receptor is mediated by G proteins which activate adenylate cyclase. Mediates melanogenesis, the production of eumelanin (black/brown) and phaeomelanin (red/yellow), via regulation of cAMP signaling in melanocytes. The chain is Melanocyte-stimulating hormone receptor (MC1R) from Leontopithecus chrysomelas (Golden-headed lion tamarin).